The primary structure comprises 72 residues: Large ribosomal subunit protein uL29 (72 aa).

The protein belongs to the universal ribosomal protein uL29 family.

This chain is Large ribosomal subunit protein uL29, found in Prochlorococcus marinus (strain MIT 9515).